A 202-amino-acid chain; its full sequence is Imidazoleglycerol-phosphate dehydratase (202 aa).

This sequence belongs to the imidazoleglycerol-phosphate dehydratase family.

The protein resides in the cytoplasm. The catalysed reaction is D-erythro-1-(imidazol-4-yl)glycerol 3-phosphate = 3-(imidazol-4-yl)-2-oxopropyl phosphate + H2O. Its pathway is amino-acid biosynthesis; L-histidine biosynthesis; L-histidine from 5-phospho-alpha-D-ribose 1-diphosphate: step 6/9. This is Imidazoleglycerol-phosphate dehydratase from Sinorhizobium medicae (strain WSM419) (Ensifer medicae).